Here is a 194-residue protein sequence, read N- to C-terminus: ATP-dependent Clp protease proteolytic subunit (194 aa).

Ser98 serves as the catalytic Nucleophile. Residue His123 is part of the active site.

It belongs to the peptidase S14 family. As to quaternary structure, fourteen ClpP subunits assemble into 2 heptameric rings which stack back to back to give a disk-like structure with a central cavity, resembling the structure of eukaryotic proteasomes.

The protein localises to the cytoplasm. The catalysed reaction is Hydrolysis of proteins to small peptides in the presence of ATP and magnesium. alpha-casein is the usual test substrate. In the absence of ATP, only oligopeptides shorter than five residues are hydrolyzed (such as succinyl-Leu-Tyr-|-NHMec, and Leu-Tyr-Leu-|-Tyr-Trp, in which cleavage of the -Tyr-|-Leu- and -Tyr-|-Trp bonds also occurs).. Its function is as follows. Cleaves peptides in various proteins in a process that requires ATP hydrolysis. Has a chymotrypsin-like activity. Plays a major role in the degradation of misfolded proteins. The protein is ATP-dependent Clp protease proteolytic subunit of Clostridium botulinum (strain Hall / ATCC 3502 / NCTC 13319 / Type A).